The sequence spans 358 residues: MFDQLDIVEERYEQLNEMLSDPEIVNDSDKLRKYSKEQADLQKTVDVYRDYKSKKEEIAEIDEMLNETEDKEEIEMLKEESASLKSAIPELEEQLKFLLIPKDPNDEKDVIVEIRAAAGGDEAAIFAGDLLRMYSKYAESQNFKTEIVEAAESDHGGYKEISFSVSGSGAYSKLKFENGAHRVQRVPETESGGRIHTSTATVAVLPEVEDVEIEIRNEDLKIDTYRSSGAGGQHVNTTDSAVRITHLPTGVIATSSEKSQIQNREKALKVLKARLYDMKLQEEQQKYAAQRKSAVGTGDRSERVRTYNYPQSRVTDHRIGLTLQKLDQIMEGKLDEIIDALTLSEQTEKLKELNNGEL.

Residue glutamine 233 is modified to N5-methylglutamine.

Belongs to the prokaryotic/mitochondrial release factor family. Post-translationally, methylated by PrmC. Methylation increases the termination efficiency of RF1.

It localises to the cytoplasm. In terms of biological role, peptide chain release factor 1 directs the termination of translation in response to the peptide chain termination codons UAG and UAA. This is Peptide chain release factor 1 from Staphylococcus haemolyticus (strain JCSC1435).